Reading from the N-terminus, the 1080-residue chain is Kinesin-like protein KIN-14E (1080 aa).

The tract at residues 1–35 (MDFSWTTGWEKAAADDDEAESAPAPAPPAPSPQEA) is disordered. A coiled-coil region spans residues 247 to 355 (QTRTSKLISK…KQEQTLLSLE (109 aa)). A Kinesin motor domain is found at 407-729 (NIRVFCRCRP…LNFASRVRRI (323 aa)). An ATP-binding site is contributed by 490-497 (GQTGTGKT). Positions 736-893 (KQVDTAELQK…EHHRSVAESK (158 aa)) form a coiled coil. Basic and acidic residues predominate over residues 960–970 (AMSEKEQHILR). The interval 960-1080 (AMSEKEQHIL…AVNKTRGWVR (121 aa)) is disordered. Residues 971-985 (SSDSMNKKVTNNSSI) show a composition bias toward polar residues. The span at 1047 to 1059 (TATSKTAAATHKT) shows a compositional bias: low complexity.

This sequence belongs to the TRAFAC class myosin-kinesin ATPase superfamily. Kinesin family. KIN-14 subfamily.

This chain is Kinesin-like protein KIN-14E, found in Oryza sativa subsp. japonica (Rice).